The chain runs to 268 residues: UPF0739 protein C1orf74 homolog (268 aa).

This sequence belongs to the UPF0739 family.

In Salmo salar (Atlantic salmon), this protein is UPF0739 protein C1orf74 homolog.